A 420-amino-acid polypeptide reads, in one-letter code: D-inositol 3-phosphate glycosyltransferase (420 aa).

His13 is a 1D-myo-inositol 3-phosphate binding site. Residues 19–20 (QP) and Gly27 each bind UDP-N-acetyl-alpha-D-glucosamine. 1D-myo-inositol 3-phosphate-binding positions include 24–29 (DAGGMN), Lys82, Tyr115, Thr139, and Arg159. UDP-N-acetyl-alpha-D-glucosamine contacts are provided by Arg233, Lys238, and Val294. Phe303, Arg304, and Ala306 together coordinate Mg(2+). The UDP-N-acetyl-alpha-D-glucosamine site is built by Glu316 and Glu324. Mg(2+) is bound at residue Thr330.

Belongs to the glycosyltransferase group 1 family. MshA subfamily. Homodimer.

The enzyme catalyses 1D-myo-inositol 3-phosphate + UDP-N-acetyl-alpha-D-glucosamine = 1D-myo-inositol 2-acetamido-2-deoxy-alpha-D-glucopyranoside 3-phosphate + UDP + H(+). In terms of biological role, catalyzes the transfer of a N-acetyl-glucosamine moiety to 1D-myo-inositol 3-phosphate to produce 1D-myo-inositol 2-acetamido-2-deoxy-glucopyranoside 3-phosphate in the mycothiol biosynthesis pathway. The polypeptide is D-inositol 3-phosphate glycosyltransferase (Pseudarthrobacter chlorophenolicus (strain ATCC 700700 / DSM 12829 / CIP 107037 / JCM 12360 / KCTC 9906 / NCIMB 13794 / A6) (Arthrobacter chlorophenolicus)).